A 100-amino-acid chain; its full sequence is A-type ATP synthase subunit F (100 aa).

Belongs to the V-ATPase F subunit family. As to quaternary structure, has multiple subunits with at least A(3), B(3), C, D, E, F, H, I and proteolipid K(x).

It is found in the cell membrane. Component of the A-type ATP synthase that produces ATP from ADP in the presence of a proton gradient across the membrane. In Methanocorpusculum labreanum (strain ATCC 43576 / DSM 4855 / Z), this protein is A-type ATP synthase subunit F.